A 517-amino-acid chain; its full sequence is Tyrosine-protein kinase Fgr (517 aa).

Glycine 2 carries the N-myristoyl glycine lipid modification. Residues cysteine 3 and cysteine 6 are each lipidated (S-palmitoyl cysteine). Basic and acidic residues predominate over residues 17 to 33; the sequence is VGLEGDFRSQGAEERYY. The interval 17 to 46 is disordered; sequence VGLEGDFRSQGAEERYYPDPTQGRSSSISP. At tyrosine 32 the chain carries Phosphotyrosine. The residue at position 50 (serine 50) is a Phosphoserine. The SH3 domain maps to 65–126; the sequence is TGVTIFVALY…PSNYVAPVDS (62 aa). In terms of domain architecture, SH2 spans 132-229; it reads WYFGKISRKD…GLCYLLTAPC (98 aa). A Phosphotyrosine modification is found at tyrosine 196. A Phosphoserine modification is found at serine 206. The 254-residue stretch at 251–504 folds into the Protein kinase domain; the sequence is IALDRRLGTG…YLQSFLEDYF (254 aa). ATP-binding positions include 257 to 265 and lysine 279; that span reads LGTGCFGDV. The active-site Proton acceptor is aspartate 370. A Phosphotyrosine; by autocatalysis modification is found at tyrosine 400. Position 511 is a phosphotyrosine; by SRC (tyrosine 511).

The protein belongs to the protein kinase superfamily. Tyr protein kinase family. SRC subfamily. As to quaternary structure, interacts with ITGB1, ITGB2, MS4A2/FCER1B and FCGR2. Interacts (via SH2 domain) with SYK (tyrosine phosphorylated). Interacts (via SH2 domain) with FLT3 (tyrosine phosphorylated). Interacts with PTK2/FAK1. Interacts (via SH2 domain) with HCLS1 (tyrosine phosphorylated by SYK). Interacts with SIRPA and PTPNS1. Interacts (not phosphorylated on tyrosine residues) with CBL; FGR tyrosine phosphorylation promotes dissociation. Interacts with CLNK. In terms of processing, ubiquitinated. Becomes ubiquitinated in response to ITGB2 signaling; this does not lead to degradation. Phosphorylated. Autophosphorylated on tyrosine residues. Becomes phosphorylated in response to FCGR2 engagement, cell adhesion and signaling by ITGB2. Prior phosphorylation at Tyr-511 by SRC inhibits ulterior autophosphorylation at Tyr-400. Detected in brain cortex (at protein level).

Its subcellular location is the cell membrane. The protein resides in the cell projection. The protein localises to the ruffle membrane. It is found in the cytoplasm. It localises to the cytosol. Its subcellular location is the cytoskeleton. The protein resides in the mitochondrion inner membrane. The protein localises to the mitochondrion intermembrane space. The catalysed reaction is L-tyrosyl-[protein] + ATP = O-phospho-L-tyrosyl-[protein] + ADP + H(+). Its activity is regulated as follows. Activated by autophosphorylation. Prior phosphorylation at Tyr-511 by SRC inhibits ulterior autophosphorylation at Tyr-400. Activated by phorbol myristate acetate, phosphatidic acid and poly-Lys. Binding (via SH2 domain) of HCLS1 that is already phosphorylated by SYK strongly increases kinase activity. Non-receptor tyrosine-protein kinase that transmits signals from cell surface receptors devoid of kinase activity and contributes to the regulation of immune responses, including neutrophil, monocyte, macrophage and mast cell functions, cytoskeleton remodeling in response to extracellular stimuli, phagocytosis, cell adhesion and migration. Promotes mast cell degranulation, release of inflammatory cytokines and IgE-mediated anaphylaxis. Acts downstream of receptors that bind the Fc region of immunoglobulins, such as MS4A2/FCER1B, FCER1G and FCGR2. Acts downstream of ITGB1 and ITGB2, and regulates actin cytoskeleton reorganization, cell spreading and adhesion. Depending on the context, activates or inhibits cellular responses. Functions as a negative regulator of ITGB2 signaling, phagocytosis and SYK activity in monocytes. Required for normal ITGB1 and ITGB2 signaling, normal cell spreading and adhesion in neutrophils and macrophages. Functions as a positive regulator of cell migration and regulates cytoskeleton reorganization via RAC1 activation. Phosphorylates SYK (in vitro) and promotes SYK-dependent activation of AKT1 and MAP kinase signaling. Phosphorylates PLD2 in antigen-stimulated mast cells, leading to PLD2 activation and the production of the signaling molecules lysophosphatidic acid and diacylglycerol. Promotes activation of PIK3R1. Phosphorylates FASLG, and thereby regulates its ubiquitination and subsequent internalization. Phosphorylates ABL1. Promotes phosphorylation of CBL, CTTN, PIK3R1, PTK2/FAK1, PTK2B/PYK2 and VAV2. Phosphorylates HCLS1 that has already been phosphorylated by SYK, but not unphosphorylated HCLS1. Together with CLNK, it acts as a negative regulator of natural killer cell-activating receptors and inhibits interferon-gamma production. This Rattus norvegicus (Rat) protein is Tyrosine-protein kinase Fgr (Fgr).